The chain runs to 166 residues: Large ribosomal subunit protein uL11 (166 aa).

The protein belongs to the universal ribosomal protein uL11 family. In terms of assembly, part of the ribosomal stalk of the 50S ribosomal subunit. Interacts with L10 and the large rRNA to form the base of the stalk. L10 forms an elongated spine to which L12 dimers bind in a sequential fashion forming a multimeric L10(L12)X complex.

Forms part of the ribosomal stalk which helps the ribosome interact with GTP-bound translation factors. This Methanopyrus kandleri (strain AV19 / DSM 6324 / JCM 9639 / NBRC 100938) protein is Large ribosomal subunit protein uL11.